The sequence spans 345 residues: Probable dual-specificity RNA methyltransferase RlmN (345 aa).

Catalysis depends on E98, which acts as the Proton acceptor. One can recognise a Radical SAM core domain in the interval T104–E332. C111 and C337 are joined by a disulfide. Positions 118, 122, and 125 each coordinate [4Fe-4S] cluster. S-adenosyl-L-methionine contacts are provided by residues G165 to E166, S195, S218 to H220, and N294. C337 functions as the S-methylcysteine intermediate in the catalytic mechanism.

Belongs to the radical SAM superfamily. RlmN family. Requires [4Fe-4S] cluster as cofactor.

The protein resides in the cytoplasm. It carries out the reaction adenosine(2503) in 23S rRNA + 2 reduced [2Fe-2S]-[ferredoxin] + 2 S-adenosyl-L-methionine = 2-methyladenosine(2503) in 23S rRNA + 5'-deoxyadenosine + L-methionine + 2 oxidized [2Fe-2S]-[ferredoxin] + S-adenosyl-L-homocysteine. The catalysed reaction is adenosine(37) in tRNA + 2 reduced [2Fe-2S]-[ferredoxin] + 2 S-adenosyl-L-methionine = 2-methyladenosine(37) in tRNA + 5'-deoxyadenosine + L-methionine + 2 oxidized [2Fe-2S]-[ferredoxin] + S-adenosyl-L-homocysteine. Its function is as follows. Specifically methylates position 2 of adenine 2503 in 23S rRNA and position 2 of adenine 37 in tRNAs. The sequence is that of Probable dual-specificity RNA methyltransferase RlmN from Trichodesmium erythraeum (strain IMS101).